The following is a 929-amino-acid chain: Synaptopodin (929 aa).

Met1 is subject to N-acetylmethionine. Over residues 1–12 (MLGPHLPPPPLA) the composition is skewed to pro residues. Positions 1-260 (MLGPHLPPPP…EASLLRHLEK (260 aa)) are disordered. Composition is skewed to basic and acidic residues over residues 60-69 (GVSRSGDDSA) and 91-110 (SREE…DWDV). Ser140 is subject to Phosphoserine. The span at 142 to 151 (TEKDLKEAKA) shows a compositional bias: basic and acidic residues. Over residues 152-170 (RSQQIAAQLTTPPSSNSRG) the composition is skewed to polar residues. Ser207 bears the Phosphoserine mark. Positions 224–234 (EPGPPRHPSPQ) are enriched in pro residues. Ser263 bears the Phosphoserine mark. Residues 285 to 389 (GLHLSQNREA…TLCADGQPQA (105 aa)) are disordered. Positions 317-332 (LASPSATLTTPTSNSS) are enriched in low complexity. N-linked (GlcNAc...) asparagine glycosylation is present at Asn330. Polar residues predominate over residues 333–379 (HNPPATDVNQNPPATVVPQSLPLSSIQQNSSEAQLPSNGTGPASKPS). Phosphoserine is present on residues Ser501 and Ser525. The disordered stretch occupies residues 509 to 558 (FGEKAPAPQPPSLPDRSPRPQRHIMSRSPMVERRMMGQRSPASERRPLGN). Thr560 bears the Phosphothreonine mark. Residues 562 to 565 (PPTY) carry the PPxY motif motif. Ser580 carries the post-translational modification Phosphoserine. The PPxY motif motif lies at 581–584 (PPSY). Disordered stretches follow at residues 589 to 610 (PSSD…KTGI) and 630 to 726 (KPKV…KGAE). Residues 646-656 (ADEKRRQRDQG) are compositionally biased toward basic and acidic residues. A phosphoserine mark is found at Ser685, Ser702, and Tyr738. Residues 685-698 (SPAAAEEVVPEWAS) are compositionally biased toward low complexity. A disordered region spans residues 740-763 (IESSSHTPELARCPSPTMSLPSSW). Position 746 is a phosphothreonine (Thr746). Phosphoserine occurs at positions 754, 758, and 779. Thr783 is subject to Phosphothreonine. Phosphoserine is present on residues Pro784, Thr804, Arg812, Lys826, Ser833, Ser854, Pro871, and Pro894. A compositionally biased stretch (low complexity) spans 826–839 (KVSPRAASPAKPSS). The interval 826–916 (KVSPRAASPA…RPSFSTRNAG (91 aa)) is disordered. A compositionally biased stretch (polar residues) spans 866 to 880 (GLYTSPGQDSLQPTA).

The protein belongs to the synaptopodin family. Interacts with BAIAP1. Interacts with actin. Interacts (via PPxY motifs) with WWC1 (via WW domains). In terms of processing, O-glycosylated. As to expression, expressed in cerebral cortex.

It is found in the cytoplasm. It localises to the cytoskeleton. The protein resides in the cell junction. The protein localises to the tight junction. Its subcellular location is the perikaryon. It is found in the cell projection. It localises to the dendritic spine. The protein resides in the postsynaptic density. The protein localises to the synapse. Its subcellular location is the cytosol. Actin-associated protein that may play a role in modulating actin-based shape and motility of dendritic spines and renal podocyte foot processes. Seems to be essential for the formation of spine apparatuses in spines of telencephalic neurons, which is involved in synaptic plasticity. The sequence is that of Synaptopodin (SYNPO) from Homo sapiens (Human).